We begin with the raw amino-acid sequence, 104 residues long: MSKPSLTLPRIVLHDLWQHKWILLLALLVLSNAVAVVYTSHVSRKLTTEWDQLLQERDRLDIEWRNLLLEEQSQTEHSRITRIASKDLNMSRPLPSEEIVVKVP.

The Cytoplasmic segment spans residues 1–20 (MSKPSLTLPRIVLHDLWQHK). The helical transmembrane segment at 21–43 (WILLLALLVLSNAVAVVYTSHVS) threads the bilayer. Topologically, residues 44–104 (RKLTTEWDQL…PSEEIVVKVP (61 aa)) are periplasmic.

This sequence belongs to the FtsL family. As to quaternary structure, part of a complex composed of FtsB, FtsL and FtsQ.

The protein resides in the cell inner membrane. In terms of biological role, essential cell division protein. May link together the upstream cell division proteins, which are predominantly cytoplasmic, with the downstream cell division proteins, which are predominantly periplasmic. In Shewanella oneidensis (strain ATCC 700550 / JCM 31522 / CIP 106686 / LMG 19005 / NCIMB 14063 / MR-1), this protein is Cell division protein FtsL.